The following is a 261-amino-acid chain: uncharacterized protein (261 aa).

Residues 1-22 (MIHSKKLTLGICLVLLIILIGG) form the signal peptide. Cys23 carries N-palmitoyl cysteine lipidation. Cys23 carries S-diacylglycerol cysteine lipidation.

This sequence belongs to the staphylococcal tandem lipoprotein family.

The protein localises to the cell membrane. This is an uncharacterized protein from Staphylococcus aureus (strain NCTC 8325 / PS 47).